Reading from the N-terminus, the 207-residue chain is Guanylate kinase (207 aa).

The Guanylate kinase-like domain occupies 6–185 (GLLIVLSGPS…AKNRIQSIVE (180 aa)). An ATP-binding site is contributed by 13-20 (GPSGVGKG).

Belongs to the guanylate kinase family.

It is found in the cytoplasm. The enzyme catalyses GMP + ATP = GDP + ADP. In terms of biological role, essential for recycling GMP and indirectly, cGMP. The chain is Guanylate kinase from Staphylococcus epidermidis (strain ATCC 35984 / DSM 28319 / BCRC 17069 / CCUG 31568 / BM 3577 / RP62A).